Here is a 325-residue protein sequence, read N- to C-terminus: MAVDLMRFPKIDDQTAIQEAASQGLQSMEHLIRVLSNRPEQQHNVDCSEITDFTVSKFKTVISLLNRTGHARFRRGPVHSTSSAASQKLQSQIVKNTQPEAPIVRTTTNHPQIVPPPSSVTLDFSKPSIFGTKAKSAELEFSKENFSVSLNSSFMSSAITGDGSVSNGKIFLASAPLQPVNSSGKPPLAGHPYRKRCLEHEHSESFSGKVSGSAYGKCHCKKSRKNRMKRTVRVPAISAKIADIPPDEYSWRKYGQKPIKGSPHPRGYYKCSTFRGCPARKHVERALDDPAMLIVTYEGEHRHNQSAMQENISSSGINDLVFASA.

A DNA-binding region (WRKY) is located at residues 240 to 306 (KIADIPPDEY…YEGEHRHNQS (67 aa)).

The protein belongs to the WRKY group II-d family. In terms of tissue distribution, in young, mature and senescent leaves.

The protein resides in the nucleus. In terms of biological role, transcription factor. Interacts specifically with the W box (5'-(T)TGAC[CT]-3'), a frequently occurring elicitor-responsive cis-acting element. Regulates rhizobacterium B.cereus AR156-induced systemic resistance (ISR) to P.syringae pv. tomato DC3000, probably by activating the jasmonic acid (JA)- signaling pathway. The chain is Probable WRKY transcription factor 11 (WRKY11) from Arabidopsis thaliana (Mouse-ear cress).